The primary structure comprises 2717 residues: Naringenin synthase (2717 aa).

Positions 13 to 422 (HHAVESRDKV…VGRKKELIIR (410 aa)) are adenylation (A) domain. The 87-residue stretch at 531-617 (AAVEALVLAE…AVRDYLFNRL (87 aa)) folds into the Carrier 1 domain. O-(pantetheine 4'-phosphoryl)serine is present on serine 576. The Ketosynthase family 3 (KS3) domain maps to 638-1066 (AEPIAIISMA…GTNAHIILEQ (429 aa)). Residues cysteine 810, histidine 945, and histidine 988 each act as for beta-ketoacyl synthase activity in the active site. One can recognise a Malonyl-CoA:ACP transacylase (MAT) domain in the interval 1204-1462 (PIFSRAFKEA…GPSAVLSPHV (259 aa)). Residues 1549–1688 (HGVLYRTTSI…GTLKLISLPP (140 aa)) form an N-terminal hotdog fold region. Positions 1549 to 1847 (HGVLYRTTSI…LRAVQPPVVE (299 aa)) constitute a PKS/mFAS DH domain. Residues 1561 to 1842 (TNDIICAGFV…ISEVMLRAVQ (282 aa)) form a dehydratase (DH) domain region. The Proton acceptor; for dehydratase activity role is filled by histidine 1581. A C-terminal hotdog fold region spans residues 1703–1847 (NSEVDVSKAY…LRAVQPPVVE (145 aa)). Aspartate 1764 acts as the Proton donor; for dehydratase activity in catalysis. A Ketoreductase (KR) domain is found at 2008–2186 (GTVLITGGTG…AVSLAWGPWA (179 aa)). Positions 2277–2354 (SRSDTLLGLV…ALVQYLLDRI (78 aa)) constitute a Carrier 2 domain. Position 2313 is an O-(pantetheine 4'-phosphoryl)serine (serine 2313). Acidic residues predominate over residues 2361-2373 (EIELDQDVAEEET). A disordered region spans residues 2361 to 2412 (EIELDQDVAEEETVSGTNGHQNGHQNGTQNGHSNGHANGASTNGDATDGIDP). The segment covering 2375-2396 (SGTNGHQNGHQNGTQNGHSNGH) has biased composition (low complexity). The interval 2497–2711 (SLSVYSAVAA…AIAVEIEHWA (215 aa)) is thioester reductase (TE) domain.

It in the N-terminal section; belongs to the NRP synthetase family. Requires pantetheine 4'-phosphate as cofactor.

PKS-NRPS hybrid synthetase that, alone, is sufficient to produce naringenin chalcone, the direct precursor of naringenin, by using p-coumaric acid (p-CA) or p-hydroxybenzoic acid (p-HBA) with the involvement of malonyl-CoA molecules. The adenylation (A) domain activates p-CA or p-HBA as adenylates, which are transferred to the thiol group of the pantetheinyl residue of the T domain, and further transferred to the adjacent PKS portion of fnsA. Besides p-CA and p-HBA, the A domain is also able to activate other substrates such as cinnamic acid and salicyclic acid. Within the PKS portion of fnsA, p-CA and p-HBA act as starter units for respectively three or four malonyl-CoA molecules for elongation by the AT and KS domains of fnsA. Afterwards, naringenin chalcone is cyclized through Claisen condensation and thereby released either spontaneously or catalyzed by the TE domain. Finally, naringenin chalcone is converted to naringenin spontaneously or by a chalcone isomerase. In Pestalotiopsis fici (strain W106-1 / CGMCC3.15140), this protein is Naringenin synthase.